A 645-amino-acid polypeptide reads, in one-letter code: Threonine--tRNA ligase (645 aa).

A TGS domain is found at 1 to 63; the sequence is MEQINIQFPD…ETDGSIEIVT (63 aa). A catalytic region spans residues 242–540; it reads DHRKIGKELE…LTEETKGAFP (299 aa). 3 residues coordinate Zn(2+): Cys336, His387, and His517.

This sequence belongs to the class-II aminoacyl-tRNA synthetase family. As to quaternary structure, homodimer. It depends on Zn(2+) as a cofactor.

Its subcellular location is the cytoplasm. It catalyses the reaction tRNA(Thr) + L-threonine + ATP = L-threonyl-tRNA(Thr) + AMP + diphosphate + H(+). Functionally, catalyzes the attachment of threonine to tRNA(Thr) in a two-step reaction: L-threonine is first activated by ATP to form Thr-AMP and then transferred to the acceptor end of tRNA(Thr). Also edits incorrectly charged L-seryl-tRNA(Thr). The protein is Threonine--tRNA ligase of Staphylococcus aureus (strain bovine RF122 / ET3-1).